Here is a 1407-residue protein sequence, read N- to C-terminus: Probable phosphoribosylformylglycinamidine synthase, chloroplastic/mitochondrial (1407 aa).

A chloroplast and mitochondrion-targeting transit peptide spans 1-53 (MNTSQATRAALFLNGSNRQAMLLQRSSMSQLWGSVRMRTSRLSLNRTKAVSLR). ATP-binding positions include 407–418 (GAETGAGGRIRD), 487–489 (QGY), and alanine 786. Mg(2+) is bound by residues aspartate 787, glutamate 826, asparagine 830, and aspartate 989. Serine 991 lines the ATP pocket. One can recognise a Glutamine amidotransferase type-1 domain in the interval 1141–1381 (KVAVIREEGS…LMWQFPWYPT (241 aa)). Cysteine 1235 serves as the catalytic Nucleophile. Catalysis depends on residues histidine 1366 and glutamate 1368.

This sequence in the N-terminal section; belongs to the FGAMS family.

Its subcellular location is the plastid. It localises to the chloroplast. The protein localises to the mitochondrion. The enzyme catalyses N(2)-formyl-N(1)-(5-phospho-beta-D-ribosyl)glycinamide + L-glutamine + ATP + H2O = 2-formamido-N(1)-(5-O-phospho-beta-D-ribosyl)acetamidine + L-glutamate + ADP + phosphate + H(+). The protein operates within purine metabolism; IMP biosynthesis via de novo pathway; 5-amino-1-(5-phospho-D-ribosyl)imidazole from N(2)-formyl-N(1)-(5-phospho-D-ribosyl)glycinamide: step 1/2. In terms of biological role, essential to the male gametophyte development. Phosphoribosylformylglycinamidine synthase involved in the purines biosynthetic pathway. Catalyzes the ATP-dependent conversion of formylglycinamide ribonucleotide (FGAR) and glutamine to yield formylglycinamidine ribonucleotide (FGAM) and glutamate. This is Probable phosphoribosylformylglycinamidine synthase, chloroplastic/mitochondrial from Arabidopsis thaliana (Mouse-ear cress).